A 369-amino-acid chain; its full sequence is sn-glycerol-3-phosphate import ATP-binding protein UgpC (369 aa).

Residues 4–235 form the ABC transporter domain; the sequence is LSLRNVQKTY…PASTFVAGFI (232 aa). An ATP-binding site is contributed by 37–44; it reads GPSGCGKS.

This sequence belongs to the ABC transporter superfamily. sn-glycerol-3-phosphate importer (TC 3.A.1.1.3) family. In terms of assembly, the complex is composed of two ATP-binding proteins (UgpC), two transmembrane proteins (UgpA and UgpE) and a solute-binding protein (UgpB).

Its subcellular location is the cell inner membrane. The catalysed reaction is sn-glycerol 3-phosphate(out) + ATP + H2O = sn-glycerol 3-phosphate(in) + ADP + phosphate + H(+). Part of the ABC transporter complex UgpBAEC involved in sn-glycerol-3-phosphate (G3P) import. Responsible for energy coupling to the transport system. The sequence is that of sn-glycerol-3-phosphate import ATP-binding protein UgpC from Cupriavidus pinatubonensis (strain JMP 134 / LMG 1197) (Cupriavidus necator (strain JMP 134)).